The sequence spans 69 residues: uncharacterized protein (69 aa).

The protein resides in the mitochondrion. This is an uncharacterized protein from Marchantia polymorpha (Common liverwort).